Reading from the N-terminus, the 185-residue chain is Elongation factor P (185 aa).

It belongs to the elongation factor P family.

It is found in the cytoplasm. The protein operates within protein biosynthesis; polypeptide chain elongation. Involved in peptide bond synthesis. Stimulates efficient translation and peptide-bond synthesis on native or reconstituted 70S ribosomes in vitro. Probably functions indirectly by altering the affinity of the ribosome for aminoacyl-tRNA, thus increasing their reactivity as acceptors for peptidyl transferase. The polypeptide is Elongation factor P (Geobacillus thermodenitrificans (strain NG80-2)).